Reading from the N-terminus, the 102-residue chain is NADH-quinone oxidoreductase subunit K 2 (102 aa).

3 helical membrane passes run isoleucine 4–valine 24, isoleucine 30–alanine 50, and isoleucine 62–leucine 82.

The protein belongs to the complex I subunit 4L family. NDH-1 is composed of 14 different subunits. Subunits NuoA, H, J, K, L, M, N constitute the membrane sector of the complex.

It is found in the cell inner membrane. The enzyme catalyses a quinone + NADH + 5 H(+)(in) = a quinol + NAD(+) + 4 H(+)(out). In terms of biological role, NDH-1 shuttles electrons from NADH, via FMN and iron-sulfur (Fe-S) centers, to quinones in the respiratory chain. The immediate electron acceptor for the enzyme in this species is believed to be ubiquinone. Couples the redox reaction to proton translocation (for every two electrons transferred, four hydrogen ions are translocated across the cytoplasmic membrane), and thus conserves the redox energy in a proton gradient. The protein is NADH-quinone oxidoreductase subunit K 2 of Solibacter usitatus (strain Ellin6076).